A 500-amino-acid chain; its full sequence is Na(+)/H(+) antiporter NhaB (500 aa).

Transmembrane regions (helical) follow at residues 13 to 33 (FLGA…IINP), 34 to 54 (IAVV…EFIF), 62 to 82 (CYPL…GLTS), 97 to 117 (ILLL…LLFI), 129 to 149 (IVIS…LDAL), 242 to 262 (FLYV…TVVI), 306 to 326 (GIVA…VGLV), 350 to 370 (FEEA…VSVI), 392 to 412 (PIMF…VFVA), 449 to 469 (VATP…IAPL), and 477 to 497 (MVWM…LCVT).

The protein belongs to the NhaB Na(+)/H(+) (TC 2.A.34) antiporter family.

The protein resides in the cell inner membrane. The enzyme catalyses 2 Na(+)(in) + 3 H(+)(out) = 2 Na(+)(out) + 3 H(+)(in). In terms of biological role, na(+)/H(+) antiporter that extrudes sodium in exchange for external protons. This Marinomonas sp. (strain MWYL1) protein is Na(+)/H(+) antiporter NhaB.